Here is a 189-residue protein sequence, read N- to C-terminus: GTPase NRas (189 aa).

10–17 contributes to the GTP binding site; it reads GAGGVGKS. The short motif at 32–40 is the Effector region element; it reads YDPTIEDSY. GTP contacts are provided by residues 57 to 61 and 116 to 119; these read DTAGQ and NKCD. Residues 166 to 185 form a hypervariable region region; the sequence is YRMKKLNSNEDGNQGCMGLS. C181 carries the S-palmitoyl cysteine lipid modification. C186 is lipidated: S-farnesyl cysteine. Residues 187–189 constitute a propeptide, removed in mature form; sequence IVM.

The protein belongs to the small GTPase superfamily. Ras family. Palmitoylated by the ZDHHC9-GOLGA7 complex. Depalmitoylated by ABHD17A, ABHD17B and ABHD17C. A continuous cycle of de- and re-palmitoylation regulates rapid exchange between plasma membrane and Golgi.

It is found in the cell membrane. It localises to the golgi apparatus membrane. The catalysed reaction is GTP + H2O = GDP + phosphate + H(+). Its activity is regulated as follows. Alternates between an inactive form bound to GDP and an active form bound to GTP. Activated by a guanine nucleotide-exchange factor (GEF) and inactivated by a GTPase-activating protein (GAP). Functionally, ras proteins bind GDP/GTP and possess intrinsic GTPase activity. The sequence is that of GTPase NRas (NRAS) from Gallus gallus (Chicken).